A 562-amino-acid chain; its full sequence is F-box only protein 33 (562 aa).

Residues 68–114 (AAGAASLPSELIVHIFSFLPAPDRLRASASCSHWRECLFYPALWPQL) form the F-box domain. Residues 155-173 (GGGPGDGGSGGGTDTGTGG) are compositionally biased toward gly residues. The interval 155–176 (GGGPGDGGSGGGTDTGTGGEDG) is disordered.

Part of the SCF (SKP1-CUL1-F-box) E3 ubiquitin-protein ligase complex SCF(FBXO33) formed of CUL1, SKP1, RBX1 and FBXO33. Interacts via its N-terminus with YBX1 CSD domain. Directly interacts with SKP1 and CUL1.

The protein operates within protein modification; protein ubiquitination. Functionally, substrate recognition component of a SCF (SKP1-CUL1-F-box protein) E3 ubiquitin-protein ligase complex which mediates the ubiquitination and subsequent proteasomal degradation of target proteins. Probably recognizes and binds to phosphorylated target proteins. Recognizes YBX1. The chain is F-box only protein 33 (Fbxo33) from Mus musculus (Mouse).